A 142-amino-acid polypeptide reads, in one-letter code: Large ribosomal subunit protein uL11 (142 aa).

It belongs to the universal ribosomal protein uL11 family. In terms of assembly, part of the ribosomal stalk of the 50S ribosomal subunit. Interacts with L10 and the large rRNA to form the base of the stalk. L10 forms an elongated spine to which L12 dimers bind in a sequential fashion forming a multimeric L10(L12)X complex. One or more lysine residues are methylated.

Forms part of the ribosomal stalk which helps the ribosome interact with GTP-bound translation factors. The chain is Large ribosomal subunit protein uL11 from Haemophilus ducreyi (strain 35000HP / ATCC 700724).